The following is a 410-amino-acid chain: LL-diaminopimelate aminotransferase (410 aa).

Substrate contacts are provided by tyrosine 15 and glycine 42. Pyridoxal 5'-phosphate is bound by residues tyrosine 72, 108–109 (AK), tyrosine 132, asparagine 188, tyrosine 219, and 247–249 (SFS). Substrate-binding residues include lysine 109, tyrosine 132, and asparagine 188. Lysine 250 bears the N6-(pyridoxal phosphate)lysine mark. The pyridoxal 5'-phosphate site is built by arginine 258 and asparagine 293. Residues asparagine 293 and arginine 389 each contribute to the substrate site.

This sequence belongs to the class-I pyridoxal-phosphate-dependent aminotransferase family. LL-diaminopimelate aminotransferase subfamily. In terms of assembly, homodimer. It depends on pyridoxal 5'-phosphate as a cofactor.

The catalysed reaction is (2S,6S)-2,6-diaminopimelate + 2-oxoglutarate = (S)-2,3,4,5-tetrahydrodipicolinate + L-glutamate + H2O + H(+). It participates in amino-acid biosynthesis; L-lysine biosynthesis via DAP pathway; LL-2,6-diaminopimelate from (S)-tetrahydrodipicolinate (aminotransferase route): step 1/1. Involved in the synthesis of meso-diaminopimelate (m-DAP or DL-DAP), required for both lysine and peptidoglycan biosynthesis. Catalyzes the direct conversion of tetrahydrodipicolinate to LL-diaminopimelate. The sequence is that of LL-diaminopimelate aminotransferase from Bacteroides thetaiotaomicron (strain ATCC 29148 / DSM 2079 / JCM 5827 / CCUG 10774 / NCTC 10582 / VPI-5482 / E50).